We begin with the raw amino-acid sequence, 310 residues long: p-hydroxybenzoic acid efflux pump subunit AaeA (310 aa).

The helical transmembrane segment at 12–32 (AITVVLVILAFIAIFNAWVYY) threads the bilayer.

Belongs to the membrane fusion protein (MFP) (TC 8.A.1) family.

The protein resides in the cell inner membrane. Functionally, forms an efflux pump with AaeB. This chain is p-hydroxybenzoic acid efflux pump subunit AaeA, found in Escherichia coli O127:H6 (strain E2348/69 / EPEC).